The following is a 198-amino-acid chain: Imidazoleglycerol-phosphate dehydratase (198 aa).

Belongs to the imidazoleglycerol-phosphate dehydratase family.

It localises to the cytoplasm. It catalyses the reaction D-erythro-1-(imidazol-4-yl)glycerol 3-phosphate = 3-(imidazol-4-yl)-2-oxopropyl phosphate + H2O. It participates in amino-acid biosynthesis; L-histidine biosynthesis; L-histidine from 5-phospho-alpha-D-ribose 1-diphosphate: step 6/9. The sequence is that of Imidazoleglycerol-phosphate dehydratase from Agrobacterium fabrum (strain C58 / ATCC 33970) (Agrobacterium tumefaciens (strain C58)).